The following is a 142-amino-acid chain: Large ribosomal subunit protein uL11 (142 aa).

The protein belongs to the universal ribosomal protein uL11 family. In terms of assembly, part of the ribosomal stalk of the 50S ribosomal subunit. Interacts with L10 and the large rRNA to form the base of the stalk. L10 forms an elongated spine to which L12 dimers bind in a sequential fashion forming a multimeric L10(L12)X complex. Post-translationally, one or more lysine residues are methylated.

Functionally, forms part of the ribosomal stalk which helps the ribosome interact with GTP-bound translation factors. In Rhizobium meliloti (strain 1021) (Ensifer meliloti), this protein is Large ribosomal subunit protein uL11.